Here is a 226-residue protein sequence, read N- to C-terminus: PKHD-type hydroxylase PSPA7_5129 (226 aa).

In terms of domain architecture, Fe2OG dioxygenase spans Lys78–Ser178. Fe cation-binding residues include His96, Asp98, and His159. Residue Arg169 participates in 2-oxoglutarate binding.

The cofactor is Fe(2+). L-ascorbate is required as a cofactor.

The chain is PKHD-type hydroxylase PSPA7_5129 from Pseudomonas paraeruginosa (strain DSM 24068 / PA7) (Pseudomonas aeruginosa (strain PA7)).